Reading from the N-terminus, the 175-residue chain is Adenine phosphoribosyltransferase (175 aa).

The protein belongs to the purine/pyrimidine phosphoribosyltransferase family. As to quaternary structure, homodimer.

The protein localises to the cytoplasm. It carries out the reaction AMP + diphosphate = 5-phospho-alpha-D-ribose 1-diphosphate + adenine. The protein operates within purine metabolism; AMP biosynthesis via salvage pathway; AMP from adenine: step 1/1. Functionally, catalyzes a salvage reaction resulting in the formation of AMP, that is energically less costly than de novo synthesis. The sequence is that of Adenine phosphoribosyltransferase from Parvibaculum lavamentivorans (strain DS-1 / DSM 13023 / NCIMB 13966).